The sequence spans 214 residues: uncharacterized protein (214 aa).

This is an uncharacterized protein from Sinorhizobium fredii (strain NBRC 101917 / NGR234).